A 259-amino-acid polypeptide reads, in one-letter code: UPF0246 protein PSPPH_1119 (259 aa).

It belongs to the UPF0246 family.

This chain is UPF0246 protein PSPPH_1119, found in Pseudomonas savastanoi pv. phaseolicola (strain 1448A / Race 6) (Pseudomonas syringae pv. phaseolicola (strain 1448A / Race 6)).